The chain runs to 327 residues: Deoxyribonuclease (327 aa).

Positions 1–24 (MSKKLRNFLVRIIVAAFASFAVMA) form a signal peptide, or 35. Positions 299-327 (DSTTDEIENSVDDSEEIVYNDTTTEEEEN) are disordered.

It carries out the reaction Endonucleolytic cleavage to 5'-phosphodinucleotide and 5'-phosphooligonucleotide end-products.. Functionally, may have a role in S.equisimilis virulence. The sequence is that of Deoxyribonuclease (sdc) from Streptococcus dysgalactiae subsp. equisimilis (Streptococcus equisimilis).